We begin with the raw amino-acid sequence, 548 residues long: Acetamidase (548 aa).

Catalysis depends on charge relay system residues Lys129 and Ser204. Ser228 (acyl-ester intermediate) is an active-site residue.

The protein belongs to the amidase family.

The enzyme catalyses a monocarboxylic acid amide + H2O = a monocarboxylate + NH4(+). The catalysed reaction is acetamide + H2O = acetate + NH4(+). Allows acetamide to be used as a sole carbon or nitrogen source. The chain is Acetamidase (amdS) from Emericella nidulans (strain FGSC A4 / ATCC 38163 / CBS 112.46 / NRRL 194 / M139) (Aspergillus nidulans).